We begin with the raw amino-acid sequence, 209 residues long: MKVFLIRHGQTDQNKRGILQGSVDTNLNETGRLQAKLLAQRLLPLDIDQIFCSSMKRCRETIAPYLELKPEVPIVYTDLIRERVYGDLEGMNVVEAKKLLNANHPDHYGEGLSHLTSRLLKFWDEYVVPLQGKKKCVIVLCHGGVINVLRTHFMEEKGFTFDKSKLESKIITFNTSITEIEVTEHGTGHIHTFGDASHLESEETGKLIA.

H8 serves as the catalytic Tele-phosphohistidine intermediate. E82 acts as the Proton donor/acceptor in catalysis.

This sequence belongs to the phosphoglycerate mutase family. BPG-dependent PGAM subfamily.

Its subcellular location is the cytoplasm. It localises to the nucleus. The chain is Probable phosphatase C1687.21 from Schizosaccharomyces pombe (strain 972 / ATCC 24843) (Fission yeast).